We begin with the raw amino-acid sequence, 237 residues long: Type II secretion system protein J (237 aa).

Residues 1–6 constitute a propeptide, leader sequence; sequence MRLQRG. Phenylalanine 7 carries the post-translational modification N-methylphenylalanine. The chain crosses the membrane as a helical span at residues 7 to 29; the sequence is FTLLELLIAIAIFALLALATYRM. The segment at 203 to 237 is disordered; that stretch reads PLKQDQPQGQPGGENGENGEGGVPQPPEGMPGAPE. Residues 212–224 show a composition bias toward gly residues; that stretch reads QPGGENGENGEGG. Residues 226 to 237 are compositionally biased toward pro residues; that stretch reads PQPPEGMPGAPE.

This sequence belongs to the GSP J family. In terms of assembly, type II secretion is composed of four main components: the outer membrane complex, the inner membrane complex, the cytoplasmic secretion ATPase and the periplasm-spanning pseudopilus. Forms the tip of the type II pseudopilus by interacting with XcpV, XcpU and XcpX. Interacts with core component XcpT. Cleaved by prepilin peptidase. Post-translationally, methylated by prepilin peptidase at the amino group of the N-terminal phenylalanine once the leader sequence is cleaved by prepilin peptidase.

It localises to the cell inner membrane. Functionally, component of the type II secretion system required for the energy-dependent secretion of extracellular factors such as proteases and toxins from the periplasm. Part of the pseudopilus tip complex that is critical for the recognition and binding of secretion substrates. Type II pseudopilus confers increased bacterial adhesive capabilities. This chain is Type II secretion system protein J (xcpW), found in Pseudomonas aeruginosa (strain ATCC 15692 / DSM 22644 / CIP 104116 / JCM 14847 / LMG 12228 / 1C / PRS 101 / PAO1).